The sequence spans 345 residues: MSSYQKELEKYRDIDEDEILRTLSPEELEQLDCELQEMDPENMLLPAGLRQRDQTKKSPTGPLDREALLQYLEQQALEVKERDDLVPFTGEKKGKPYIQPKREIPAEEQITLEPELEEALAHATDAEMCDIAAILDMYTLMSNKQYYDALCSGEICNTEGISSVVQPDKYKPVPDEPPNPTNIEEILKRVRSNDKELEEVNLNNIQDIPIPMLSELCEAMKANTYVRSFSLVATRSGDPIANAVADMLRENRSLQSLNIESNFISSTGLMAVLKAVRENATLTELRVDNQRQWPGDAVEMEMATVLEQCPSIVRFGYHFTQQGPRARAAQAMTRNNELRRQQKKR.

A disordered region spans residues 42–63 (NMLLPAGLRQRDQTKKSPTGPL).

This sequence belongs to the tropomodulin family. In terms of assembly, binds to the N-terminus of tropomyosin and to actin. Highly expressed in skeletal muscle.

It is found in the cytoplasm. Its subcellular location is the cytoskeleton. Its function is as follows. Blocks the elongation and depolymerization of the actin filaments at the pointed end. The Tmod/TM complex contributes to the formation of the short actin protofilament, which in turn defines the geometry of the membrane skeleton. In Homo sapiens (Human), this protein is Tropomodulin-4 (TMOD4).